The chain runs to 108 residues: uncharacterized protein (108 aa).

An N-terminal signal peptide occupies residues 1-24 (MNLWEFRFGKSFLFIPNFIMKVLA).

It to M.jannaschii MJ0803.

This is an uncharacterized protein from Methanocaldococcus jannaschii (strain ATCC 43067 / DSM 2661 / JAL-1 / JCM 10045 / NBRC 100440) (Methanococcus jannaschii).